Reading from the N-terminus, the 122-residue chain is Small ribosomal subunit protein uS12c (122 aa).

This sequence belongs to the universal ribosomal protein uS12 family. Part of the 30S ribosomal subunit.

The protein resides in the plastid. Its subcellular location is the chloroplast. Functionally, with S4 and S5 plays an important role in translational accuracy. Located at the interface of the 30S and 50S subunits. In Illicium oligandrum (Star anise), this protein is Small ribosomal subunit protein uS12c (rps12).